The primary structure comprises 124 residues: Calvin cycle protein CP12-1, chloroplastic (124 aa).

The transit peptide at 1-47 directs the protein to the chloroplast; sequence MTTIAAAGLNVATPRVVVRPVARVLGPVRLNYPWKFGSMKRMVVVKA. 2 disulfide bridges follow: C68-C77 and C110-C119. The interval 90 to 124 is disordered; that stretch reads AASHARDKKKAGGSDPLEEYCNDNPETDECRTYDN. The span at 105–116 shows a compositional bias: acidic residues; that stretch reads PLEEYCNDNPET.

Belongs to the CP12 family. Monomer. Component of a complex that contains two dimers of PRK, two tetramers of GAPDH and CP12. CP12 associates with GAPDH, causing its conformation to change. This GAPDH/CP12 complex binds PRK to form a half-complex (one unit). This unit probably dimerizes due partially to interactions between the enzymes of each unit. In terms of processing, contains two disulfide bonds; only the oxidized protein, with two disulfide bonds, is active in complex formation. The C-terminal disulfide is involved in the interaction with GAPDH and the N-terminal disulfide mediates the binding of PRK with this binary complex. In terms of tissue distribution, mostly expressed in flowers, hypocotyl, cotyledons, leaves, stems, and flower stalks. Barely detectable in roots and siliques. Present in root tips and lateral roots. Accumulates in the cotyledons of etiolated seedlings.

Its subcellular location is the plastid. The protein localises to the chloroplast. Acts as a linker essential in the assembly of a core complex of PRK/GAPDH. Coordinates the reversible inactivation of chloroplast enzymes GAPDH and PRK during darkness in photosynthetic tissues. This is Calvin cycle protein CP12-1, chloroplastic (CP12-1) from Arabidopsis thaliana (Mouse-ear cress).